A 280-amino-acid polypeptide reads, in one-letter code: Shikimate kinase (280 aa).

Residue 74-84 (PGGSGLGSSSA) coordinates ATP.

It belongs to the GHMP kinase family. Archaeal shikimate kinase subfamily.

It is found in the cytoplasm. It carries out the reaction shikimate + ATP = 3-phosphoshikimate + ADP + H(+). Its pathway is metabolic intermediate biosynthesis; chorismate biosynthesis; chorismate from D-erythrose 4-phosphate and phosphoenolpyruvate: step 5/7. The sequence is that of Shikimate kinase (aroK) from Archaeoglobus fulgidus (strain ATCC 49558 / DSM 4304 / JCM 9628 / NBRC 100126 / VC-16).